The chain runs to 63 residues: Beta-toxin NaTx36 (63 aa).

Positions 1 to 62 (KDGYPMRSDG…VYDSATSKCR (62 aa)) constitute an LCN-type CS-alpha/beta domain. Disulfide bonds link Cys-11–Cys-61, Cys-15–Cys-36, Cys-22–Cys-43, and Cys-26–Cys-45.

Belongs to the long (4 C-C) scorpion toxin superfamily. Sodium channel inhibitor family. Beta subfamily. In terms of tissue distribution, expressed by the venom gland.

Its subcellular location is the secreted. Functionally, beta toxins bind sodium channels (Nav) and shift the voltage of activation towards more negative potentials thereby affecting sodium channel activation and promoting spontaneous and repetitive firing. Only when tested on grasshopper mouse channels, this toxin inhibits Nav1.8/SCN10A sodium currents in a concentration and voltage-dependent manner (IC(50)=680 nM). This toxin hyperpolarizes the voltage dependence of Nav1.8/SCN10A activation, as well as steady-state fast inactivation and slow inactivation. In contrast to most beta scorpion toxins, this toxin inhibits grasshopper mouse Nav1.8/SCN10A currents through modulation of the domain I S4 voltage sensor, and the domain II second S5-S6 extracellular pore loop. The chain is Beta-toxin NaTx36 from Centruroides sculpturatus (Arizona bark scorpion).